A 288-amino-acid chain; its full sequence is Quinate/shikimate dehydrogenase (288 aa).

Residues Lys-71 and Asp-107 each contribute to the substrate site. NAD(+) contacts are provided by residues 132–135 (AGGA), 155–158 (NRRD), Lys-205, 232–235 (CVYN), and Gly-255.

This sequence belongs to the shikimate dehydrogenase family. As to quaternary structure, homodimer.

It carries out the reaction L-quinate + NAD(+) = 3-dehydroquinate + NADH + H(+). The catalysed reaction is L-quinate + NADP(+) = 3-dehydroquinate + NADPH + H(+). The enzyme catalyses shikimate + NADP(+) = 3-dehydroshikimate + NADPH + H(+). It catalyses the reaction shikimate + NAD(+) = 3-dehydroshikimate + NADH + H(+). Its pathway is metabolic intermediate biosynthesis; chorismate biosynthesis; chorismate from D-erythrose 4-phosphate and phosphoenolpyruvate: step 4/7. In terms of biological role, the actual biological function of YdiB remains unclear, nor is it known whether 3-dehydroshikimate or quinate represents the natural substrate. Catalyzes the reversible NAD-dependent reduction of both 3-dehydroshikimate (DHSA) and 3-dehydroquinate to yield shikimate (SA) and quinate, respectively. It can use both NAD or NADP for catalysis, however it has higher catalytic efficiency with NAD. In Escherichia coli (strain 55989 / EAEC), this protein is Quinate/shikimate dehydrogenase.